Consider the following 153-residue polypeptide: D-aminoacyl-tRNA deacylase (153 aa).

The short motif at 142–143 (GP) is the Gly-cisPro motif, important for rejection of L-amino acids element.

This sequence belongs to the DTD family. In terms of assembly, homodimer.

It localises to the cytoplasm. The catalysed reaction is glycyl-tRNA(Ala) + H2O = tRNA(Ala) + glycine + H(+). It carries out the reaction a D-aminoacyl-tRNA + H2O = a tRNA + a D-alpha-amino acid + H(+). In terms of biological role, an aminoacyl-tRNA editing enzyme that deacylates mischarged D-aminoacyl-tRNAs. Also deacylates mischarged glycyl-tRNA(Ala), protecting cells against glycine mischarging by AlaRS. Acts via tRNA-based rather than protein-based catalysis; rejects L-amino acids rather than detecting D-amino acids in the active site. By recycling D-aminoacyl-tRNA to D-amino acids and free tRNA molecules, this enzyme counteracts the toxicity associated with the formation of D-aminoacyl-tRNA entities in vivo and helps enforce protein L-homochirality. This is D-aminoacyl-tRNA deacylase from Cupriavidus taiwanensis (strain DSM 17343 / BCRC 17206 / CCUG 44338 / CIP 107171 / LMG 19424 / R1) (Ralstonia taiwanensis (strain LMG 19424)).